A 1135-amino-acid polypeptide reads, in one-letter code: Large proline-rich protein bag6-A (1135 aa).

The 76-residue stretch at 7 to 82 (MEVTVKTLDS…HLVERAPPQT (76 aa)) folds into the Ubiquitin-like domain. Disordered stretches follow at residues 76–114 (ERAP…RNGN), 194–238 (EQAA…SPSE), 350–407 (TGNG…PHPR), 498–522 (SFQF…VPGA), 552–612 (QGGS…QHLS), 661–698 (PVST…ESLP), 1075–1099 (KATG…EAQG), and 1116–1135 (NESY…RGDP). A compositionally biased stretch (low complexity) spans 79–100 (PPQTQPSTGGPSTSSSTSPTSS). The span at 212–227 (RETLPQTTQNTDGQSN) shows a compositional bias: polar residues. Residues 228-237 (TTPTSHPSPS) show a composition bias toward low complexity. The span at 367–387 (QPPSTNTSEPQRPNTENQPPS) shows a compositional bias: polar residues. Composition is skewed to low complexity over residues 555-600 (SSTS…SVPS) and 663-672 (STAPTQSASQ). The span at 673–692 (APPPSSPPPPPAHSSPPPAA) shows a compositional bias: pro residues. Basic and acidic residues predominate over residues 1087–1099 (CVRRELDNSEAQG). Residues 1116-1129 (NESYSAQRFPNTQR) show a composition bias toward polar residues.

Component of the bag6/bat3 complex.

The protein localises to the cytoplasm. It is found in the cytosol. The protein resides in the nucleus. It localises to the secreted. Its subcellular location is the extracellular exosome. Its function is as follows. ATP-independent molecular chaperone preventing the aggregation of misfolded and hydrophobic patches-containing proteins. Functions as part of a cytosolic protein quality control complex, the bag6/bat3 complex, which maintains these client proteins in a soluble state and participates in their proper delivery to the endoplasmic reticulum or alternatively can promote their sorting to the proteasome where they undergo degradation. The bag6/bat3 complex is involved in the post-translational delivery of tail-anchored/type II transmembrane proteins to the endoplasmic reticulum membrane. Similarly, the bag6/bat3 complex also functions as a sorting platform for proteins of the secretory pathway that are mislocalized to the cytosol either delivering them to the proteasome for degradation or to the endoplasmic reticulum. The bag6/bat3 complex also plays a role in the endoplasmic reticulum-associated degradation (ERAD), a quality control mechanism that eliminates unwanted proteins of the endoplasmic reticulum through their retrotranslocation to the cytosol and their targeting to the proteasome. It maintains these retrotranslocated proteins in an unfolded yet soluble state condition in the cytosol to ensure their proper delivery to the proteasome. Also required for selective ubiquitin-mediated degradation of defective nascent chain polypeptides by the proteasome. Also involved in endoplasmic reticulum stress-induced pre-emptive quality control, a mechanism that selectively attenuates the translocation of newly synthesized proteins into the endoplasmic reticulum and reroutes them to the cytosol for proteasomal degradation. May ensure the proper degradation of these proteins and thereby protects the endoplasmic reticulum from protein overload upon stress. By stabilizing a large spectrum of proteins, may indirectly affect different biological processes including apoptosis. By controlling the steady-state expression of the IGF1R receptor, indirectly regulates the insulin-like growth factor receptor signaling pathway. Functionally, when nuclear, may also act as a component of some chromatin regulator complex. This chain is Large proline-rich protein bag6-A, found in Xenopus laevis (African clawed frog).